Consider the following 323-residue polypeptide: Transaldolase (323 aa).

The Schiff-base intermediate with substrate role is filled by Lys131.

It belongs to the transaldolase family. Type 1 subfamily. Homodimer.

It is found in the cytoplasm. The catalysed reaction is D-sedoheptulose 7-phosphate + D-glyceraldehyde 3-phosphate = D-erythrose 4-phosphate + beta-D-fructose 6-phosphate. The protein operates within carbohydrate degradation; pentose phosphate pathway; D-glyceraldehyde 3-phosphate and beta-D-fructose 6-phosphate from D-ribose 5-phosphate and D-xylulose 5-phosphate (non-oxidative stage): step 2/3. Functionally, transaldolase is important for the balance of metabolites in the pentose-phosphate pathway. The polypeptide is Transaldolase (Blochmanniella floridana).